Here is an 81-residue protein sequence, read N- to C-terminus: Photosystem I iron-sulfur center (81 aa).

4Fe-4S ferredoxin-type domains are found at residues 2-31 (SHSVKIYDTCIGCTQCVRACPTDVLEMIPW) and 39-68 (IAPAPRTEDCVGCKRCESACPTDFLSVRVY). Positions 11, 14, 17, 21, 48, 51, 54, and 58 each coordinate [4Fe-4S] cluster.

As to quaternary structure, the eukaryotic PSI reaction center is composed of at least 11 subunits. [4Fe-4S] cluster serves as cofactor.

Its subcellular location is the plastid. It localises to the chloroplast thylakoid membrane. The enzyme catalyses reduced [plastocyanin] + hnu + oxidized [2Fe-2S]-[ferredoxin] = oxidized [plastocyanin] + reduced [2Fe-2S]-[ferredoxin]. Its function is as follows. Apoprotein for the two 4Fe-4S centers FA and FB of photosystem I (PSI); essential for photochemical activity. FB is the terminal electron acceptor of PSI, donating electrons to ferredoxin. The C-terminus interacts with PsaA/B/D and helps assemble the protein into the PSI complex. Required for binding of PsaD and PsaE to PSI. PSI is a plastocyanin-ferredoxin oxidoreductase, converting photonic excitation into a charge separation, which transfers an electron from the donor P700 chlorophyll pair to the spectroscopically characterized acceptors A0, A1, FX, FA and FB in turn. The chain is Photosystem I iron-sulfur center from Liriodendron tulipifera (Tuliptree).